Reading from the N-terminus, the 673-residue chain is ATP-dependent zinc metalloprotease FtsH (673 aa).

Topologically, residues 1-7 are cytoplasmic; that stretch reads MNGFFKN. Residues 8-28 form a helical membrane-spanning segment; that stretch reads LSLWLVIGLLMVMLFNLFNSP. The Periplasmic portion of the chain corresponds to 29–100; it reads QGPGQSITFS…DVREPEGTPM (72 aa). The helical transmembrane segment at 101-121 threads the bilayer; the sequence is LMQILISWFPMLLLIAVWIYF. At 122 to 673 the chain is on the cytoplasmic side; sequence MRQMQSGGGR…DTPEGDDKDR (552 aa). 194–201 contacts ATP; it reads GPPGTGKT. His416 is a binding site for Zn(2+). Glu417 is a catalytic residue. Zn(2+)-binding residues include His420 and Asp492. A disordered region spans residues 601–673; sequence ALKPLKKKDE…DTPEGDDKDR (73 aa). Over residues 648-660 the composition is skewed to polar residues; it reads STRTATEASTQEV. The span at 661 to 673 shows a compositional bias: basic and acidic residues; the sequence is VSKDTPEGDDKDR.

In the central section; belongs to the AAA ATPase family. The protein in the C-terminal section; belongs to the peptidase M41 family. Homohexamer. It depends on Zn(2+) as a cofactor.

The protein localises to the cell inner membrane. Its function is as follows. Acts as a processive, ATP-dependent zinc metallopeptidase for both cytoplasmic and membrane proteins. Plays a role in the quality control of integral membrane proteins. The protein is ATP-dependent zinc metalloprotease FtsH of Magnetococcus marinus (strain ATCC BAA-1437 / JCM 17883 / MC-1).